The chain runs to 247 residues: Phycocyanobilin:ferredoxin oxidoreductase (247 aa).

The protein belongs to the HY2 family.

The catalysed reaction is (2R,3Z)-phycocyanobilin + 4 oxidized [2Fe-2S]-[ferredoxin] = biliverdin IXalpha + 4 reduced [2Fe-2S]-[ferredoxin] + 4 H(+). Catalyzes the four-electron reduction of biliverdin IX-alpha (2-electron reduction at both the A and D rings); the reaction proceeds via an isolatable 2-electron intermediate, 181,182-dihydrobiliverdin. This is Phycocyanobilin:ferredoxin oxidoreductase from Synechococcus sp. (strain CC9605).